Here is a 198-residue protein sequence, read N- to C-terminus: MADTGQSDRKERSNGVIVGTCLAFVVGMVGMAYAAVPLYDMFCRVTGYNGTTQRVEQESDLILDEKVKVTFDANVAAGLPWEFAPVQRDIDVRIGETVQITYRARNLASTPTTGQATFNVTPMAAGAYFNKVQCFCFTETTLQPGEEMEMPVVFFVDPEIVKTVETKGIKTLTLSYTFYPREPSKPVAQVKSRTENKL.

Over 1 to 12 the chain is Cytoplasmic; sequence MADTGQSDRKER. A helical; Signal-anchor for type II membrane protein transmembrane segment spans residues 13–35; the sequence is SNGVIVGTCLAFVVGMVGMAYAA. Topologically, residues 36-198 are periplasmic; sequence VPLYDMFCRV…QVKSRTENKL (163 aa).

Belongs to the COX11/CtaG family.

The protein resides in the cell inner membrane. Functionally, exerts its effect at some terminal stage of cytochrome c oxidase synthesis, probably by being involved in the insertion of the copper B into subunit I. This chain is Cytochrome c oxidase assembly protein CtaG, found in Sinorhizobium medicae (strain WSM419) (Ensifer medicae).